Here is a 647-residue protein sequence, read N- to C-terminus: Spindle pole body-associated protein VIK1 (647 aa).

A compositionally biased stretch (polar residues) spans Asn36–Ser51. The tract at residues Asn36–Leu55 is disordered. The stretch at Asp202–Thr350 forms a coiled coil.

Interacts with KAR3; the interaction is direct.

It localises to the cytoplasm. Its subcellular location is the cytoskeleton. The protein resides in the microtubule organizing center. It is found in the spindle pole body. The protein localises to the nucleus. Together with the minus end-directed microtubule motor KAR3, plays a role in microtubule organization. Recruits KAR3 to microtubules, and together they may stabilize the polymers. The KAR3-VIK1 heterodimer cross-links anti-parallel microtubules. Targets and/or maintains KAR3 at the spindle pole body during vegetative growth. This chain is Spindle pole body-associated protein VIK1 (VIK1), found in Saccharomyces cerevisiae (strain ATCC 204508 / S288c) (Baker's yeast).